The following is a 282-amino-acid chain: Acyl-CoA-binding domain-containing protein 6 (282 aa).

A disordered region spans residues methionine 1–threonine 39. Residue serine 41 is modified to Phosphoserine. The ACB domain maps to leucine 42–proline 127. An acyl-CoA-binding positions include tyrosine 69–lysine 73 and lysine 95. Phosphoserine is present on serine 106. Tyrosine 114 is an an acyl-CoA binding site. 2 ANK repeats span residues glutamate 191–cysteine 220 and glutamate 224–leucine 253.

As to quaternary structure, monomer.

It localises to the cytoplasm. It is found in the nucleus. Functionally, binds long-chain acyl-coenzyme A molecules with a strong preference for unsaturated C18:1-CoA, lower affinity for unsaturated C20:4-CoA, and very weak affinity for saturated C16:0-CoA. Does not bind fatty acids. Plays a role in protein N-myristoylation. This chain is Acyl-CoA-binding domain-containing protein 6 (Acbd6), found in Mus musculus (Mouse).